The sequence spans 209 residues: Thiamine-phosphate synthase (209 aa).

4-amino-2-methyl-5-(diphosphooxymethyl)pyrimidine is bound by residues 41 to 45 (QLREK) and asparagine 73. The Mg(2+) site is built by aspartate 74 and aspartate 93. Serine 112 contacts 4-amino-2-methyl-5-(diphosphooxymethyl)pyrimidine. Residue 138-140 (TGT) coordinates 2-[(2R,5Z)-2-carboxy-4-methylthiazol-5(2H)-ylidene]ethyl phosphate. Lysine 141 is a binding site for 4-amino-2-methyl-5-(diphosphooxymethyl)pyrimidine. Residues glycine 168 and 188-189 (VS) each bind 2-[(2R,5Z)-2-carboxy-4-methylthiazol-5(2H)-ylidene]ethyl phosphate.

This sequence belongs to the thiamine-phosphate synthase family. Requires Mg(2+) as cofactor.

It catalyses the reaction 2-[(2R,5Z)-2-carboxy-4-methylthiazol-5(2H)-ylidene]ethyl phosphate + 4-amino-2-methyl-5-(diphosphooxymethyl)pyrimidine + 2 H(+) = thiamine phosphate + CO2 + diphosphate. The enzyme catalyses 2-(2-carboxy-4-methylthiazol-5-yl)ethyl phosphate + 4-amino-2-methyl-5-(diphosphooxymethyl)pyrimidine + 2 H(+) = thiamine phosphate + CO2 + diphosphate. It carries out the reaction 4-methyl-5-(2-phosphooxyethyl)-thiazole + 4-amino-2-methyl-5-(diphosphooxymethyl)pyrimidine + H(+) = thiamine phosphate + diphosphate. The protein operates within cofactor biosynthesis; thiamine diphosphate biosynthesis; thiamine phosphate from 4-amino-2-methyl-5-diphosphomethylpyrimidine and 4-methyl-5-(2-phosphoethyl)-thiazole: step 1/1. Functionally, condenses 4-methyl-5-(beta-hydroxyethyl)thiazole monophosphate (THZ-P) and 2-methyl-4-amino-5-hydroxymethyl pyrimidine pyrophosphate (HMP-PP) to form thiamine monophosphate (TMP). This Alkaliphilus oremlandii (strain OhILAs) (Clostridium oremlandii (strain OhILAs)) protein is Thiamine-phosphate synthase.